Here is a 674-residue protein sequence, read N- to C-terminus: MRKILVTNALPYANGDLHLGHMLGYIQSDIWVRFQKLQGNQCIFVCGSDTHGTPIMLKAKSLGITPEELVTKYSNRHLQDFTDFEINFDNYHSTHNSLNKEIVEDIYNKLNNKNLISKKAIAQAYDPEAKMFLPDRFVKGTCPKCKAEDQYGDSCEVCGATYDPTELINPRSVISGQSPIQKNSEHFFFDLPALEKNIKDWIESNTLLQPEVANKLAEWFEQGLQSWDISRDAPYFGFAIPGTNEQKFFYVWLDAPMGYIASFKDYCNKNNINFGDFWGDSSSESELYHFIGKDIIYFHALFWPAILSSTGYKTPTSVFANGFLTVNGKKMSKSRGTFIQARTYLDNLEPSYLRYYFASRLTSRIDDIDLNLEEFVTKSNSDIVGKVVNIASRCAGFIYKKFDATLSGEIFDPELESEFSKNHDAITQAFEKREFAHAVRLIMALADKANQFIDYHKPWQLAKEEGQEQKVHQVCSQGINMFKVLIAYLKPIIPSIVAEAERFLNIQFISWADAPKFLINHKIDKFKPLATRIEKEKVDKILEDTKKMFENEQAPQSKKEEPKLDIAAECTFDDFMKVDLRIAKITEASHVEGADKLLKLILDLGGVTKQVFAGIKSAYKPEDLIGKHTIMVANLAPRKMKFGMSEGMVLAAGDGKGIYILEPHEGAQPGMRVK.

The short motif at 11–21 (PYANGDLHLGH) is the 'HIGH' region element. Positions 142, 145, 155, and 158 each coordinate Zn(2+). The 'KMSKS' region signature appears at 330 to 334 (KMSKS). Lys333 contributes to the ATP binding site. A tRNA-binding domain is found at 574 to 674 (DFMKVDLRIA…EGAQPGMRVK (101 aa)).

The protein belongs to the class-I aminoacyl-tRNA synthetase family. MetG type 1 subfamily. As to quaternary structure, homodimer. It depends on Zn(2+) as a cofactor.

The protein localises to the cytoplasm. The catalysed reaction is tRNA(Met) + L-methionine + ATP = L-methionyl-tRNA(Met) + AMP + diphosphate. In terms of biological role, is required not only for elongation of protein synthesis but also for the initiation of all mRNA translation through initiator tRNA(fMet) aminoacylation. This Francisella tularensis subsp. holarctica (strain FTNF002-00 / FTA) protein is Methionine--tRNA ligase.